The primary structure comprises 1732 residues: Lys-gingipain W83 (1732 aa).

The N-terminal stretch at 1 to 24 (MRKLLLLIAASLLGVGLYAQSAKI) is a signal peptide. Positions 25–228 (KLDAPTTRTT…ETAYKQLFNR (204 aa)) are excised as a propeptide. Residues Asp313, Asp337, Asp339, Phe341, and Glu343 each coordinate Ca(2+). The active-site Proton donor is His444. Cys477 (nucleophile) is an active-site residue. 2 residues coordinate Ca(2+): Phe482 and Glu491. The disordered stretch occupies residues 965–988 (DAPNGTPNPNPNPNPNPGTTLSES). Residues 970–980 (TPNPNPNPNPN) show a composition bias toward pro residues. Residues Ser988, Glu990, Asp1001, Asp1003, Asp1005, His1007, Ser1022, Gly1024, Asn1043, Asp1146, Glu1147, Asp1433, Glu1435, Asp1446, Asp1448, Asp1450, Asn1452, Ser1470, Ile1472, Asn1490, and Asp1595 each contribute to the Ca(2+) site.

Belongs to the peptidase C25 family. In terms of processing, proteolytically cleaved into a catalytic subunit and three adhesins. Arg-gingipain is involved in this post-translational processing.

The protein resides in the secreted. It catalyses the reaction Endopeptidase with strict specificity for lysyl bonds.. Its function is as follows. Cysteine proteinase with a strong preference for substrates with Lys in the P1 position. Hydrolyzes bovine hemoglobin, bovine serum albumin, casein, human placental type I collagen and human IgA and IgG. Disrupts the functions of polymorphonuclear leukocytes. May act as a virulence factor in the development of peridontal disease. Involved in the coaggregation of P.gingivalis with other oral bacteria. Has hemolytic activity; this is mediated by the adhesin domains and does not require the catalytic domain. The polypeptide is Lys-gingipain W83 (Porphyromonas gingivalis (Bacteroides gingivalis)).